The chain runs to 162 residues: MPSFDVVSEVDLMEVENAFNQARKEIAQRFDFKGTHTELERDKEQNVLIRAGSEGRAEAALQVLMEKLAKRGVALESLDPQKLEPASGGHVRQLVKLKRGLKVEDARKIVAKVKESGIKVQAAIQGEAVRVTGKKRDDLQAAIHAIRAAGFPIPLQFQNFRE.

The protein belongs to the YajQ family.

In terms of biological role, nucleotide-binding protein. The sequence is that of Nucleotide-binding protein Adeh_0094 from Anaeromyxobacter dehalogenans (strain 2CP-C).